A 214-amino-acid chain; its full sequence is Large ribosomal subunit protein uL3 (214 aa).

The residue at position 153 (Q153) is an N5-methylglutamine.

Belongs to the universal ribosomal protein uL3 family. Part of the 50S ribosomal subunit. Forms a cluster with proteins L14 and L19. Methylated by PrmB.

In terms of biological role, one of the primary rRNA binding proteins, it binds directly near the 3'-end of the 23S rRNA, where it nucleates assembly of the 50S subunit. The polypeptide is Large ribosomal subunit protein uL3 (Methylobacillus flagellatus (strain ATCC 51484 / DSM 6875 / VKM B-1610 / KT)).